The primary structure comprises 365 residues: Flagellar P-ring protein (365 aa).

Positions 1 to 19 (MIKFLSTFMLLLVTTVVQA) are cleaved as a signal peptide.

It belongs to the FlgI family. The basal body constitutes a major portion of the flagellar organelle and consists of four rings (L,P,S, and M) mounted on a central rod.

The protein resides in the periplasm. It is found in the bacterial flagellum basal body. Assembles around the rod to form the L-ring and probably protects the motor/basal body from shearing forces during rotation. This is Flagellar P-ring protein from Escherichia fergusonii (strain ATCC 35469 / DSM 13698 / CCUG 18766 / IAM 14443 / JCM 21226 / LMG 7866 / NBRC 102419 / NCTC 12128 / CDC 0568-73).